Here is a 301-residue protein sequence, read N- to C-terminus: Lipoyl synthase (301 aa).

7 residues coordinate [4Fe-4S] cluster: Cys-37, Cys-42, Cys-48, Cys-63, Cys-67, Cys-70, and Ser-276. The Radical SAM core domain maps to Trp-49–Leu-265.

Belongs to the radical SAM superfamily. Lipoyl synthase family. [4Fe-4S] cluster serves as cofactor.

The protein localises to the cytoplasm. It catalyses the reaction [[Fe-S] cluster scaffold protein carrying a second [4Fe-4S](2+) cluster] + N(6)-octanoyl-L-lysyl-[protein] + 2 oxidized [2Fe-2S]-[ferredoxin] + 2 S-adenosyl-L-methionine + 4 H(+) = [[Fe-S] cluster scaffold protein] + N(6)-[(R)-dihydrolipoyl]-L-lysyl-[protein] + 4 Fe(3+) + 2 hydrogen sulfide + 2 5'-deoxyadenosine + 2 L-methionine + 2 reduced [2Fe-2S]-[ferredoxin]. Its pathway is protein modification; protein lipoylation via endogenous pathway; protein N(6)-(lipoyl)lysine from octanoyl-[acyl-carrier-protein]: step 2/2. In terms of biological role, catalyzes the radical-mediated insertion of two sulfur atoms into the C-6 and C-8 positions of the octanoyl moiety bound to the lipoyl domains of lipoate-dependent enzymes, thereby converting the octanoylated domains into lipoylated derivatives. This Rickettsia felis (strain ATCC VR-1525 / URRWXCal2) (Rickettsia azadi) protein is Lipoyl synthase.